The primary structure comprises 421 residues: Galactooligosaccharide-binding protein (421 aa).

Residues 1 to 22 (MKMAKKCSVFMLCAAVSLSLAA) form the signal peptide. A lipid anchor (N-palmitoyl cysteine) is attached at C23. C23 carries S-diacylglycerol cysteine lipidation. The disordered stretch occupies residues 393 to 421 (ATGKADPKQALDQAAETAKGQIKAKHSGK).

This sequence belongs to the bacterial solute-binding protein 1 family. In terms of assembly, the complex is composed of two ATP-binding proteins (MsmX), two transmembrane proteins (GanP and GanQ) and a solute-binding protein (GanS).

It localises to the cell membrane. Its function is as follows. Involved in galactan degradation. Part of the ABC transporter complex GanPQS involved in the uptake of galactooligosaccharides. Binds mainly galactotetraose and galactotriose. This is Galactooligosaccharide-binding protein from Bacillus subtilis (strain 168).